The following is a 297-amino-acid chain: uncharacterized protein (297 aa).

Belongs to the glycosyltransferase 2 family.

This is an uncharacterized protein from Mycoplasma genitalium (strain ATCC 33530 / DSM 19775 / NCTC 10195 / G37) (Mycoplasmoides genitalium).